We begin with the raw amino-acid sequence, 154 residues long: MLRLLLLPLFLFTLSMCMGQTFQYSRGWTNGKRSFNAASPLLANGHLHRASELGLTDLYDLQDWSSDRRLERCLSQLQRSLIARNCVPGSDFNANRVDPDPENSAHPRLSNSNGENVLYSSANIPNRHRQSNELLEELSAAGGASAEPNVFGKH.

The signal sequence occupies residues 1 to 19 (MLRLLLLPLFLFTLSMCMG). Glutamine 20 carries the pyrrolidone carboxylic acid modification. Residue asparagine 30 is modified to Asparagine amide. Residues 70–154 (LERCLSQLQR…SAEPNVFGKH (85 aa)) constitute a propeptide that is removed on maturation. The tract at residues 91–119 (DFNANRVDPDPENSAHPRLSNSNGENVLY) is disordered. The span at 109–119 (LSNSNGENVLY) shows a compositional bias: polar residues.

Belongs to the corazonin family. In terms of tissue distribution, from late embryo to larva, expression is consistently detected in three neuronal groups: dorso-lateral neurons (DL), dorso-medial neurons (DM), and neurons in the ventral nerve cord (vCrz). Both the vCrz and DM groups die via programmed cell death during metamorphosis, whereas the DL neurons persist to adulthood. In adults, expression is seen in a cluster of six to eight neurons per lobe in the pars lateralis (DLP), in numerous neuronal cells in the optic lobes, and in a novel group of four abdominal ganglionic neurons present only in males (ms-aCrz). Projections of the ms-aCrz neurons terminate within the ventral nerve cord, implying a role as interneurons. Terminals of the DLP neurons are found in the retrocerebral complex that produces juvenile hormone and adipokinetic hormone, located in the vicinity of terminals emanating from PDF-containing pacemaking neurons.

The protein localises to the secreted. Its function is as follows. Cardioactive peptide. Corazonin is probably involved in the physiological regulation of the heart beat. Clock (Clk) and cycle (cyc) proteins negatively regulate Crz transcription in a cell-specific manner. The sequence is that of Pro-corazonin (Crz) from Drosophila melanogaster (Fruit fly).